The primary structure comprises 178 residues: Large ribosomal subunit protein uL6 (178 aa).

Belongs to the universal ribosomal protein uL6 family. Part of the 50S ribosomal subunit.

Its function is as follows. This protein binds to the 23S rRNA, and is important in its secondary structure. It is located near the subunit interface in the base of the L7/L12 stalk, and near the tRNA binding site of the peptidyltransferase center. This Aliarcobacter butzleri (strain RM4018) (Arcobacter butzleri) protein is Large ribosomal subunit protein uL6.